Reading from the N-terminus, the 208-residue chain is Ribosome maturation factor RimP (208 aa).

The protein belongs to the RimP family.

The protein localises to the cytoplasm. In terms of biological role, required for maturation of 30S ribosomal subunits. The chain is Ribosome maturation factor RimP from Bartonella tribocorum (strain CIP 105476 / IBS 506).